Consider the following 157-residue polypeptide: Large ribosomal subunit protein eL24 (157 aa).

Lys-2 is covalently cross-linked (Glycyl lysine isopeptide (Lys-Gly) (interchain with G-Cter in SUMO2)). Position 4 is an ADP-ribosyl glutamic acid (Glu-4). Residue Lys-27 is modified to N6-acetyllysine; alternate. Lys-27 is covalently cross-linked (Glycyl lysine isopeptide (Lys-Gly) (interchain with G-Cter in SUMO2); alternate). Lys-35 participates in a covalent cross-link: Glycyl lysine isopeptide (Lys-Gly) (interchain with G-Cter in SUMO2). Lys-77 carries the post-translational modification N6-acetyllysine. Thr-83 is subject to Phosphothreonine. Ser-86 carries the phosphoserine modification. An N6-acetyllysine modification is found at Lys-93. A compositionally biased stretch (basic and acidic residues) spans 106–117; it reads EQAIRAAKEAKK. Residues 106-157 are disordered; the sequence is EQAIRAAKEAKKAKQASKKTAMAAAKAPTKAAPKQKIVKPVKVSAPRVGGKR. Over residues 123 to 140 the composition is skewed to low complexity; the sequence is KKTAMAAAKAPTKAAPKQ. The residue at position 131 (Lys-131) is an N6-succinyllysine. A Glycyl lysine isopeptide (Lys-Gly) (interchain with G-Cter in SUMO2) cross-link involves residue Lys-147. Residue Ser-149 is modified to Phosphoserine.

It belongs to the eukaryotic ribosomal protein eL24 family. In terms of assembly, component of the large ribosomal subunit. Mono-ADP-ribosylation at Glu-4 by PARP16 inhibits polysome assembly and mRNA loading, thereby inhibiting protein translation.

It is found in the cytoplasm. Functionally, component of the large ribosomal subunit. The ribosome is a large ribonucleoprotein complex responsible for the synthesis of proteins in the cell. In Bos taurus (Bovine), this protein is Large ribosomal subunit protein eL24 (RPL24).